The sequence spans 270 residues: Bacterial microcompartment shell protein PduB (270 aa).

The probable helix that binds cargo to the BMC shell stretch occupies residues 6–18 (LVEQIMAQVIARV). 2 BMC circularly permuted domains span residues 47–152 (EFVG…DRTF) and 154–258 (DVYG…LATL).

It belongs to the EutL/PduB family. Homotrimerizes to form a pseudohexamer with a central pore. The trimers pack into an array. In terms of processing, in purified BMCs seen as a 28.0 kDa and 25.0 kDa form, both of which have been N-terminally sequenced and whose N-fMet is removed; the smaller form is called PduB'.

The protein resides in the bacterial microcompartment. Its pathway is polyol metabolism; 1,2-propanediol degradation. Functionally, the two proteins produced are among the major shell proteins of the bacterial microcompartment (BMC) dedicated to 1,2-propanediol (1,2-PD) degradation. Required for structural integrity of BMCs and to mitigate propionaldehyde toxicity. The N-terminal 13 residues are important for correct assembly of the BMC shell. The isolated BMC shell component protein ratio for J:A:B':B:K:T:U is approximately 15:10:7:6:1:1:2. The N-terminus of the long form (PduB) is required for correct formation of BMCs, deletions in the first 37 residues have substantially reduced levels of the major lumen enzymes. May play a major role in binding the enzyme contents to the shell. Its function is as follows. The 1,2-PD-specific bacterial microcompartment (BMC) concentrates low levels of 1,2-PD catabolic enzymes, concentrates volatile reaction intermediates thus enhancing pathway flux and keeps the level of toxic, mutagenic propionaldehyde low. The protein is Bacterial microcompartment shell protein PduB of Salmonella typhimurium (strain LT2 / SGSC1412 / ATCC 700720).